The sequence spans 202 residues: Endothelin-1 (202 aa).

Residues 1-25 (MDYFPMIFALLFVAFQGAPEAAVLG) form the signal peptide. The propeptide occupies 26–50 (TELSAGAEDGGEKPAPATPWRPRRS). Disulfide bonds link C53–C67 and C55–C63. Residues 74–202 (VNTPEHVVPY…DKKVIYNRAH (129 aa)) constitute a propeptide that is removed on maturation. An endothelin-like region spans residues 110–124 (CQCASQTDKKCWNFC).

This sequence belongs to the endothelin/sarafotoxin family.

The protein localises to the secreted. In terms of biological role, endothelins are endothelium-derived vasoconstrictor peptides. Probable ligand for G-protein coupled receptors EDNRA and EDNRB which activates PTK2B, BCAR1, BCAR3 and, GTPases RAP1 and RHOA cascade in glomerular mesangial cells. Also binds the DEAR/FBXW7-AS1 receptor. Promotes mesenteric arterial wall remodeling via activation of ROCK signaling and subsequent colocalization of NFATC3 with F-actin filaments. NFATC3 then translocates to the nucleus where it subsequently promotes the transcription of the smooth muscle hypertrophy and differentiation marker ACTA2. The polypeptide is Endothelin-1 (EDN1) (Bos taurus (Bovine)).